Consider the following 112-residue polypeptide: Phosphoribosyl-ATP pyrophosphatase (112 aa).

It belongs to the PRA-PH family.

Its subcellular location is the cytoplasm. It carries out the reaction 1-(5-phospho-beta-D-ribosyl)-ATP + H2O = 1-(5-phospho-beta-D-ribosyl)-5'-AMP + diphosphate + H(+). The protein operates within amino-acid biosynthesis; L-histidine biosynthesis; L-histidine from 5-phospho-alpha-D-ribose 1-diphosphate: step 2/9. This chain is Phosphoribosyl-ATP pyrophosphatase, found in Chromohalobacter salexigens (strain ATCC BAA-138 / DSM 3043 / CIP 106854 / NCIMB 13768 / 1H11).